Reading from the N-terminus, the 843-residue chain is Excretory canal abnormal protein 6 (843 aa).

4 disordered regions span residues Gln54–Thr135, Thr568–Thr601, Thr748–Glu767, and Thr773–Val843. 2 stretches are compositionally biased toward pro residues: residues Thr66–Leu76 and Ala83–Ile103. The FH2 domain maps to Phe127–Thr512. Polar residues-rich tracts occupy residues Pro776–His792 and Ile819–Arg830.

The protein belongs to the formin homology family. Expressed in the excretory cell and mostly accumulates at the tip of the excretory cell canals.

The protein resides in the cytoplasm. The protein localises to the cytoskeleton. Constitutively active protein required for microtubule and F-actin growth, structural maintenance and organization during excretory cell tubulogenesis. In Caenorhabditis elegans, this protein is Excretory canal abnormal protein 6.